We begin with the raw amino-acid sequence, 214 residues long: Protein PsaE (214 aa).

The first 24 residues, 1-24 (MSHCVVLNKLESVLIIGDSRYALS), serve as a signal peptide directing secretion. The segment at residues 1-94 (MSHCVVLNKL…YKNEGYSYQK (94 aa)) is a DNA-binding region (ompR/PhoB-type).

In terms of biological role, required for expression of pH 6 antigen. In Yersinia pseudotuberculosis serotype I (strain IP32953), this protein is Protein PsaE (psaE).